A 120-amino-acid polypeptide reads, in one-letter code: Large ribosomal subunit protein bL17 (120 aa).

It belongs to the bacterial ribosomal protein bL17 family. Part of the 50S ribosomal subunit. Contacts protein L32.

This is Large ribosomal subunit protein bL17 from Geobacillus sp. (strain WCH70).